Here is a 230-residue protein sequence, read N- to C-terminus: Large ribosomal subunit protein uL1 (230 aa).

The protein belongs to the universal ribosomal protein uL1 family. As to quaternary structure, part of the 50S ribosomal subunit.

Binds directly to 23S rRNA. The L1 stalk is quite mobile in the ribosome, and is involved in E site tRNA release. Functionally, protein L1 is also a translational repressor protein, it controls the translation of the L11 operon by binding to its mRNA. This is Large ribosomal subunit protein uL1 from Leptospira borgpetersenii serovar Hardjo-bovis (strain L550).